The chain runs to 316 residues: MARRRKGRPVNGVILIDKPTGITSNDTLQKVKRIYFAEKAGHTGALDPLATGMLPICLGEATKFSQFLLDSDKRYRVVAKLGERTNTSDSDGEVVQTREVKVDRGQLERCIAKFRGTTDQIPSMFSALKYQGRPLYEYAREGIEVPRESRKITVYSIELLRFEGHEVEMEVHCSKGTYIRTITDDLGEMLGCGAHVTYLRRTGVSNYPYENMVTIEDLEALLEQAHREERAPRELLDPLLMPMDSAVQDLPEVNMIPELADHVLHGQPVQVFGAPQDGIVRMTSGDERLFIGVGHIDDDGRVAPKRLVVFRDEEEK.

The active-site Nucleophile is the Asp47.

Belongs to the pseudouridine synthase TruB family. Type 1 subfamily.

It carries out the reaction uridine(55) in tRNA = pseudouridine(55) in tRNA. Responsible for synthesis of pseudouridine from uracil-55 in the psi GC loop of transfer RNAs. The polypeptide is tRNA pseudouridine synthase B (Aliivibrio fischeri (strain MJ11) (Vibrio fischeri)).